A 1183-amino-acid polypeptide reads, in one-letter code: Peroxisomal ATPase PEX6 (1183 aa).

The interval 161–205 (ESRGKKTGEPEDGPLANGIDLNGVDDSDSDEDVLSQGDDDDENNV) is disordered. Over residues 183 to 204 (GVDDSDSDEDVLSQGDDDDENN) the composition is skewed to acidic residues. The interval 576-785 (LPNNYISPVH…VERAMTACSE (210 aa)) is AAA-cassette D1. An AAA-cassette D2 region spans residues 878-1070 (GILFYGPPGT…CSDAMLKAIT (193 aa)). 883-890 (GPPGTGKT) provides a ligand contact to ATP. The segment at 1160–1183 (IMVDGPGTGGEGAFGDDGDEEGLY) is disordered. Over residues 1173–1183 (FGDDGDEEGLY) the composition is skewed to acidic residues.

The protein belongs to the AAA ATPase family. As to quaternary structure, interacts with PEX1; forming the PEX1-PEX6 AAA ATPase complex, which is composed of a heterohexamer formed by a trimer of PEX1-PEX6 dimers.

The protein resides in the cytoplasm. It localises to the cytosol. It is found in the peroxisome membrane. It catalyses the reaction ATP + H2O = ADP + phosphate + H(+). Functionally, component of the PEX1-PEX6 AAA ATPase complex, a protein dislocase complex that mediates the ATP-dependent extraction of the PEX5 receptor from peroxisomal membranes, an essential step for PEX5 recycling. Specifically recognizes PEX5 monoubiquitinated at 'Cys-6', and pulls it out of the peroxisome lumen through the PEX2-PEX10-PEX12 retrotranslocation channel. Extraction by the PEX1-PEX6 AAA ATPase complex is accompanied by unfolding of the TPR repeats and release of bound cargo from PEX5. Regulates autophagy and biogenesis of peroxisomes and Woronin bodies. Plays important roles in mycelial growth and development and stress response. Is also essential for conidiation and fatty acid utilization. Required for nematode predation via trap formation. The sequence is that of Peroxisomal ATPase PEX6 from Arthrobotrys oligospora (strain ATCC 24927 / CBS 115.81 / DSM 1491) (Nematode-trapping fungus).